We begin with the raw amino-acid sequence, 228 residues long: Glycerol-3-phosphate acyltransferase (228 aa).

A run of 6 helical transmembrane segments spans residues 1–21 (MINWLVLNAVILIVAYLLGAT), 56–76 (VPALVVLVIDIFKGALAIALV), 104–124 (MVIIAGLIAIVGHTKSIWIGF), 136–156 (ILLAISWVVGLGTLSVFIVVL), 161–181 (IVSLSSIIAAISVSGLMFFTG), and 183–203 (PLPYQIFAITGGIYVIWRHIS).

The protein belongs to the PlsY family. In terms of assembly, probably interacts with PlsX.

It localises to the cell inner membrane. It catalyses the reaction an acyl phosphate + sn-glycerol 3-phosphate = a 1-acyl-sn-glycero-3-phosphate + phosphate. Its pathway is lipid metabolism; phospholipid metabolism. In terms of biological role, catalyzes the transfer of an acyl group from acyl-phosphate (acyl-PO(4)) to glycerol-3-phosphate (G3P) to form lysophosphatidic acid (LPA). This enzyme utilizes acyl-phosphate as fatty acyl donor, but not acyl-CoA or acyl-ACP. This chain is Glycerol-3-phosphate acyltransferase, found in Trichodesmium erythraeum (strain IMS101).